Reading from the N-terminus, the 513-residue chain is Sphingosine-1-phosphate transporter SPNS2 (513 aa).

11 consecutive transmembrane segments (helical) span residues 102-122 (GLLQ…FGYL), 130-150 (VILS…SFIP), 163-183 (LVGI…GDLF), 190-210 (LMLS…YITG), 222-242 (WALR…LIFV), 276-296 (LATS…PLYL), 320-340 (LIFG…GAGA), 354-374 (LVCA…FVAA), 378-398 (IIAA…NWAI), 422-442 (TSHL…SDLI), and 463-483 (LCPF…LFFL).

Belongs to the major facilitator superfamily. Spinster (TC 2.A.1.49) family.

The protein localises to the cell membrane. It is found in the endosome membrane. The catalysed reaction is sphing-4-enine 1-phosphate(in) = sphing-4-enine 1-phosphate(out). It carries out the reaction sphinganine 1-phosphate(in) = sphinganine 1-phosphate(out). Its function is as follows. Lipid transporter that specifically mediates export of sphingosine-1-phosphate (sphing-4-enine 1-phosphate, S1P) and sphinganine-1-phosphate. The polypeptide is Sphingosine-1-phosphate transporter SPNS2 (spns2) (Xenopus tropicalis (Western clawed frog)).